A 1015-amino-acid polypeptide reads, in one-letter code: Putative helicase mov-10-B.2 (1015 aa).

Residues 94 to 130 (QWFRPRRRQQNQANATPGNVSSVTPSSDQGPSCPESG) are disordered. Residues 109 to 123 (TPGNVSSVTPSSDQG) show a composition bias toward polar residues. 555–562 (GPPGTGKT) contacts ATP. A DEAG box motif is present at residues 677 to 680 (DEAG).

The protein belongs to the DNA2/NAM7 helicase family. SDE3 subfamily.

Its subcellular location is the cytoplasm. It localises to the P-body. The catalysed reaction is ATP + H2O = ADP + phosphate + H(+). Probable RNA helicase. Required for RNA-mediated gene silencing by the RNA-induced silencing complex (RISC). Required for both miRNA-mediated translational repression and miRNA-mediated cleavage of complementary mRNAs by RISC. This Danio rerio (Zebrafish) protein is Putative helicase mov-10-B.2 (mov10b.2).